Reading from the N-terminus, the 29-residue chain is Ranatuerin-2SEa (29 aa).

Cysteine 23 and cysteine 29 are oxidised to a cystine.

Expressed by the skin glands.

It is found in the secreted. In terms of biological role, mast cell degranulating peptide. Causes histamine release from rat peritoneal mast cells in vitro. Has antibacterial activity against the Gram-negative bacterium E.coli K12 and Gram-positive bacterium M.luteus NCT C2665. In Lithobates sevosus (Dusky gopher frog), this protein is Ranatuerin-2SEa.